The chain runs to 188 residues: Pyridoxal 5'-phosphate synthase subunit PdxT (188 aa).

46 to 48 (GES) contacts L-glutamine. Residue cysteine 78 is the Nucleophile of the active site. L-glutamine contacts are provided by residues arginine 106 and 132–133 (IR). Residues histidine 169 and glutamate 171 each act as charge relay system in the active site.

This sequence belongs to the glutaminase PdxT/SNO family. As to quaternary structure, in the presence of PdxS, forms a dodecamer of heterodimers. Only shows activity in the heterodimer.

The catalysed reaction is aldehydo-D-ribose 5-phosphate + D-glyceraldehyde 3-phosphate + L-glutamine = pyridoxal 5'-phosphate + L-glutamate + phosphate + 3 H2O + H(+). It carries out the reaction L-glutamine + H2O = L-glutamate + NH4(+). It functions in the pathway cofactor biosynthesis; pyridoxal 5'-phosphate biosynthesis. In terms of biological role, catalyzes the hydrolysis of glutamine to glutamate and ammonia as part of the biosynthesis of pyridoxal 5'-phosphate. The resulting ammonia molecule is channeled to the active site of PdxS. This Tropheryma whipplei (strain TW08/27) (Whipple's bacillus) protein is Pyridoxal 5'-phosphate synthase subunit PdxT.